We begin with the raw amino-acid sequence, 244 residues long: Protein pendolino (244 aa).

Residues 20–176 form the UBC core domain; the sequence is QQEYKILAEY…VQENIKESKE (157 aa).

The protein belongs to the ubiquitin-conjugating enzyme family. FTS subfamily. As to quaternary structure, interacts (via N-terminus) with cav/HOAP (via N-terminus); the interaction is direct. Probably interacts (via N-terminus and UBC domain) with ver and moi.

It is found in the nucleus. The protein resides in the nucleolus. It localises to the chromosome. Functionally, required for efficient DNA replication, probably through involvement in telomere replication. May have a role in telomere capping of heterochromatic chromosome ends. This is Protein pendolino from Drosophila melanogaster (Fruit fly).